The primary structure comprises 85 residues: Arminin 6494 (85 aa).

Residues 1–18 (MKTVFAILFLAFIALTYA) form the signal peptide. Positions 19–57 (RSYEDVKEEIKNEVEKEILEDLEEESDELNDKRKEINDA) are excised as a propeptide. At A82 the chain carries Alanine amide.

Belongs to the arminin family. Expressed in entodermal epithelium along the body column.

The protein resides in the secreted. It localises to the target cell membrane. Its function is as follows. Antimicrobial peptide with a broad-spectrum antimicrobial activity. Keeps its antibacterial activity under a wide range of salt concentrations that mimic physiological conditions of human blood, which is surprising, since Hydra is an obligate freshwater animal with nearly no salt tolerance. Does not affect red blood cells. This chain is Arminin 6494, found in Hydra vulgaris (Hydra).